We begin with the raw amino-acid sequence, 339 residues long: Holliday junction branch migration complex subunit RuvB (339 aa).

Residues methionine 1–tyrosine 181 form a large ATPase domain (RuvB-L) region. Residues leucine 20, arginine 21, glycine 62, lysine 65, threonine 66, threonine 67, glutamate 128 to phenylalanine 130, arginine 171, tyrosine 181, and arginine 218 each bind ATP. Threonine 66 serves as a coordination point for Mg(2+). The tract at residues serine 182–glutamate 252 is small ATPAse domain (RuvB-S). A head domain (RuvB-H) region spans residues glutamate 255–tryptophan 339. The DNA site is built by arginine 310 and arginine 315.

The protein belongs to the RuvB family. In terms of assembly, homohexamer. Forms an RuvA(8)-RuvB(12)-Holliday junction (HJ) complex. HJ DNA is sandwiched between 2 RuvA tetramers; dsDNA enters through RuvA and exits via RuvB. An RuvB hexamer assembles on each DNA strand where it exits the tetramer. Each RuvB hexamer is contacted by two RuvA subunits (via domain III) on 2 adjacent RuvB subunits; this complex drives branch migration. In the full resolvosome a probable DNA-RuvA(4)-RuvB(12)-RuvC(2) complex forms which resolves the HJ.

The protein resides in the cytoplasm. The enzyme catalyses ATP + H2O = ADP + phosphate + H(+). The RuvA-RuvB-RuvC complex processes Holliday junction (HJ) DNA during genetic recombination and DNA repair, while the RuvA-RuvB complex plays an important role in the rescue of blocked DNA replication forks via replication fork reversal (RFR). RuvA specifically binds to HJ cruciform DNA, conferring on it an open structure. The RuvB hexamer acts as an ATP-dependent pump, pulling dsDNA into and through the RuvAB complex. RuvB forms 2 homohexamers on either side of HJ DNA bound by 1 or 2 RuvA tetramers; 4 subunits per hexamer contact DNA at a time. Coordinated motions by a converter formed by DNA-disengaged RuvB subunits stimulates ATP hydrolysis and nucleotide exchange. Immobilization of the converter enables RuvB to convert the ATP-contained energy into a lever motion, pulling 2 nucleotides of DNA out of the RuvA tetramer per ATP hydrolyzed, thus driving DNA branch migration. The RuvB motors rotate together with the DNA substrate, which together with the progressing nucleotide cycle form the mechanistic basis for DNA recombination by continuous HJ branch migration. Branch migration allows RuvC to scan DNA until it finds its consensus sequence, where it cleaves and resolves cruciform DNA. The chain is Holliday junction branch migration complex subunit RuvB from Carboxydothermus hydrogenoformans (strain ATCC BAA-161 / DSM 6008 / Z-2901).